We begin with the raw amino-acid sequence, 697 residues long: Testis-specific gene 10 protein (697 aa).

An interaction with HIF1A region spans residues 556-688; the sequence is QMTNERISMQ…SPDRGLDRSL (133 aa). The disordered stretch occupies residues 656–684; that stretch reads NAYNLGPMKPNTKCHSPERAHHRSPDRGL. Positions 670-684 are enriched in basic and acidic residues; that stretch reads HSPERAHHRSPDRGL. A Phosphoserine modification is found at Ser-687.

The protein belongs to the CEP135/TSGA10 family. As to quaternary structure, interacts with HIF1A. Processed into N-terminal 27-kDa and C-terminal 55-kDa fragments. In terms of tissue distribution, predominantly expressed in testis, in spermatozoa (at protein level). Not detected in Leydig cells. The N-terminal 27-kDa fragment is also detected in liver, while the C-terminal 55-kDa fragment is also found retina, brain and kidney (at protein level).

It is found in the cytoplasm. The protein resides in the cytoskeleton. Its subcellular location is the microtubule organizing center. It localises to the centrosome. The protein localises to the centriole. Plays a role in spermatogenesis. When overexpressed, prevents nuclear localization of HIF1A. In Mus musculus (Mouse), this protein is Testis-specific gene 10 protein (Tsga10).